The sequence spans 786 residues: MGVRGLQGFVGSTCPHICTIVNIHELAERHRNKYPGCTPTIVVDAMCCLRYWYTAESWVCGGQWREYYCALRNFVAAFTSAGIKLIFFFDGMVEPGKRDEWVKRRLKNNREISKIFHYIKSKRDQPGRNMFFIPSGLAIFTRFALKTLGQETFCSLQEADYEVASYGLQHNCLGILGEDTDYLIYDTCPYFSIGDLCLESLQTIMLCREKLCESLGLRVADLPLLACLLGNDITPESMFESFRYKCLSSYASVKENAGKKGNIILAVSDYISKVLHLYQGEKKIEEMLPLGPNKALFYKGVTSYLLPGQKSPWLVQKPKGMITDKQQMVSLNPESKQEVPMCIDPEFKQEVPVCTNPESMQEVPMCMDPEPNQEASMCTDPESKQEVPMCTDSESKPEVSQYTNPESKQKLPSGIDTEFNLEALMCTHPEFKQEDVMDMEPEIKQVTMVSESEILKVARMHHVHSESYLVYNILSSGEIECSNTLEDELDQALPSQAFIYRPVRQRVYALLLGDWKDGASTGPVVKEWFVYPGNSLKHPDLVRPLQMTVQGGTPSLEVLWLSQEPAVQAQRLDTLLACFNLSSSREELQAVESPLRALCCLLIYLFVQVDTLSLEDLHAFIAQALCLQGKSTSQLMHLQLDYINSRAVQLGSLLVRGLTTLVLVNSACGFPWTTSEFMPWNVFDGKLFHQKYLQSEKGYAVEVLLEQNRSWLTKFHNLKAVVCKACSKENRRIVGRTHWDSPYTGRQGRQGYSSYRTDSTHGHSGQSWRNQGSGGRQHERNHWRRY.

The segment at 1–561 (MGVRGLQGFV…GTPSLEVLWL (561 aa)) is mediates transactivation of PPARG. 2 disordered regions span residues 371 to 413 (PNQE…KLPS) and 738 to 786 (HWDS…WRRY). Over residues 750–771 (QGYSSYRTDSTHGHSGQSWRNQ) the composition is skewed to polar residues.

The protein belongs to the constitutive coactivator of PPAR-gamma family. In terms of assembly, interacts with ESR1 and RXRA. Interacts with PPARG; in a ligand-independent manner. Ubiquitously expressed (at protein level).

The protein resides in the nucleus. Functionally, functions as a transactivator of PPARG and ESR1. Functions in adipogenesis through PPARG activation. This is Constitutive coactivator of peroxisome proliferator-activated receptor gamma (Fam120b) from Mus musculus (Mouse).